The sequence spans 145 residues: Immune protein Tsi3 (145 aa).

A signal peptide spans 1-15 (MKTVALILASLALLA). A lipid anchor (N-palmitoyl cysteine) is attached at Cys-16. Cys-16 carries S-diacylglycerol cysteine lipidation. The interval 53–85 (FDEGGKLRNPRQLEVQRQDAPPPPDLASRRLGD) is disordered. Residue Glu-126 participates in Ca(2+) binding.

In terms of assembly, forms a heterotetramer with Tse3 consisting of two Tse3 dimers and two Tsi3 dimers. Formation of the complex inactivates Tse3 enzymatic activity.

Its function is as follows. Immunity protein that plays a role in preventing early activation of toxin Tse3. Occupies Tse3 substrate binding site and prevents the substrate from entering. The polypeptide is Immune protein Tsi3 (Pseudomonas aeruginosa (strain ATCC 15692 / DSM 22644 / CIP 104116 / JCM 14847 / LMG 12228 / 1C / PRS 101 / PAO1)).